A 738-amino-acid chain; its full sequence is Adhesion G protein-coupled receptor L4 (738 aa).

The signal sequence occupies residues 1–19 (MRLLLLLVGLSTLLNHSYT). An EGF-like 1 domain is found at 20–56 (QNCKTPCLPNAKCEVLDEVAACFCSTGYTGNGITICE). The Extracellular portion of the chain corresponds to 20–480 (QNCKTPCLPN…DYNILTRITQ (461 aa)). 9 disulfide bridges follow: C22/C32, C26/C41, C43/C55, C61/C73, C67/C82, C84/C105, C111/C123, C117/C132, and C134/C155. In terms of domain architecture, EGF-like 2; calcium-binding spans 57–106 (DVDECNETSVCGDHAVCENTNGGFSCFCVEGYQTSTGKTQFTPNDGSYCQ). N62 is a glycosylation site (N-linked (GlcNAc...) asparagine). Residues 107–156 (DVDECNETSVCGDHAVCENTNGGFSCFCVEGYQTSTGKTQFTPNDGSYCQ) enclose the EGF-like 3; calcium-binding domain. N112 carries an N-linked (GlcNAc...) asparagine glycan. N175, N226, N297, N421, N429, and N443 each carry an N-linked (GlcNAc...) asparagine glycan. One can recognise a GAIN-B domain in the interval 292–467 (TQFDMNSTDL…AILMSPSTSI (176 aa)). 2 disulfides stabilise this stretch: C417/C449 and C437/C451. The segment at 417–467 (CAFWNYSVDDMNNGSWSSEGCELTYSNDTHTSCRCSHLTHFAILMSPSTSI) is GPS. Residues 481–501 (LGIIISLICLAICIFTFWFFS) form a helical membrane-spanning segment. At 502–522 (EIQSTRTTIHKNLCCSLFLAQ) the chain is on the cytoplasmic side. Residues 523 to 543 (LVFLVGININTNKLVCSIIAG) traverse the membrane as a helical segment. Topologically, residues 544-547 (LLHY) are extracellular. The chain crosses the membrane as a helical span at residues 548–568 (FFLAAFAWMCIEGIYLYLIVV). The Cytoplasmic portion of the chain corresponds to 569–580 (GLIYNKGFLHKN). The helical transmembrane segment at 581 to 601 (FYIFGYLSPAVVVGFSASLGY) threads the bilayer. The Extracellular segment spans residues 602-621 (RYYGTTKVCWLSTENNFIWS). Residues 622–642 (FIGPACLIILVNLLAFGVIIY) form a helical membrane-spanning segment. At 643–666 (KVFRHTAGLKPEVSCYENIRSCAR) the chain is on the cytoplasmic side. Residues 667–687 (GALALLFLLGTTWTFGVLHVV) form a helical membrane-spanning segment. Residues 688–694 (HASVVTA) lie on the Extracellular side of the membrane. Residues 695–715 (YLFTVSNAFQGMFIFLFLCVL) traverse the membrane as a helical segment. The Cytoplasmic portion of the chain corresponds to 716–738 (SRKIQEEYYRLFKNVPCCFECLR).

Belongs to the G-protein coupled receptor 2 family. Adhesion G-protein coupled receptor (ADGR) subfamily. As to quaternary structure, heterodimer of 2 chains generated by proteolytic processing; the large extracellular N-terminal fragment and the membrane-bound C-terminal fragment predominantly remain associated and non-covalently linked. In terms of processing, proteolytically cleaved into 2 subunits, an extracellular alpha subunit and a seven-transmembrane subunit. Post-translationally, glycosylated. In terms of tissue distribution, abundantly expressed in heart, lung, and kidney. Less evident expression is observed in brain, skeletal muscle, liver and spleen. No expression is detected in testis.

The protein localises to the cell membrane. Functionally, endothelial orphan receptor that acts as a key regulator of angiogenesis. The chain is Adhesion G protein-coupled receptor L4 (Adgrl4) from Rattus norvegicus (Rat).